Reading from the N-terminus, the 185-residue chain is MIEIRFHGRGGQGAVTAANILAEAAFIEGKYVQAFPFFGVERRGAPVTAFTRIDEKPIRIKTQIYEPDVVVVLDPSLLETVDVTAGLKEDGIVIVNTEKSKEEVLEKLKRKPKKLALVDATTIALETLGLPITNTAILGAVAKATGLVKIESVETAIKDTFSGELGEKNAKAAREAFEKTQIFEV.

As to quaternary structure, heterotetramer of one alpha, one beta, one delta and one gamma chain.

The enzyme catalyses 2 oxidized [2Fe-2S]-[ferredoxin] + pyruvate + CoA = 2 reduced [2Fe-2S]-[ferredoxin] + acetyl-CoA + CO2 + H(+). The catalysed reaction is 3-methyl-2-oxobutanoate + 2 oxidized [2Fe-2S]-[ferredoxin] + CoA = 2-methylpropanoyl-CoA + 2 reduced [2Fe-2S]-[ferredoxin] + CO2 + H(+). The protein is Pyruvate/ketoisovalerate oxidoreductases common subunit gamma (porG) of Pyrococcus abyssi (strain GE5 / Orsay).